Consider the following 342-residue polypeptide: Nicotinate-nucleotide--dimethylbenzimidazole phosphoribosyltransferase (342 aa).

Residue glutamate 311 is the Proton acceptor of the active site.

Belongs to the CobT family.

The catalysed reaction is 5,6-dimethylbenzimidazole + nicotinate beta-D-ribonucleotide = alpha-ribazole 5'-phosphate + nicotinate + H(+). It functions in the pathway nucleoside biosynthesis; alpha-ribazole biosynthesis; alpha-ribazole from 5,6-dimethylbenzimidazole: step 1/2. In terms of biological role, catalyzes the synthesis of alpha-ribazole-5'-phosphate from nicotinate mononucleotide (NAMN) and 5,6-dimethylbenzimidazole (DMB). This is Nicotinate-nucleotide--dimethylbenzimidazole phosphoribosyltransferase from Photobacterium profundum (strain SS9).